Reading from the N-terminus, the 629-residue chain is tRNA uridine 5-carboxymethylaminomethyl modification enzyme MnmG (629 aa).

FAD contacts are provided by residues 13–18 (GGGHAG), Val-125, and Ser-180. Residue 273–287 (GPRYCPSIEDKVMRF) coordinates NAD(+). An FAD-binding site is contributed by Gln-370.

Belongs to the MnmG family. In terms of assembly, homodimer. Heterotetramer of two MnmE and two MnmG subunits. FAD serves as cofactor.

Its subcellular location is the cytoplasm. Functionally, NAD-binding protein involved in the addition of a carboxymethylaminomethyl (cmnm) group at the wobble position (U34) of certain tRNAs, forming tRNA-cmnm(5)s(2)U34. The protein is tRNA uridine 5-carboxymethylaminomethyl modification enzyme MnmG of Escherichia coli (strain SMS-3-5 / SECEC).